Reading from the N-terminus, the 505-residue chain is Aspartyl/glutamyl-tRNA(Asn/Gln) amidotransferase subunit B (505 aa).

Belongs to the GatB/GatE family. GatB subfamily. Heterotrimer of A, B and C subunits.

The catalysed reaction is L-glutamyl-tRNA(Gln) + L-glutamine + ATP + H2O = L-glutaminyl-tRNA(Gln) + L-glutamate + ADP + phosphate + H(+). It carries out the reaction L-aspartyl-tRNA(Asn) + L-glutamine + ATP + H2O = L-asparaginyl-tRNA(Asn) + L-glutamate + ADP + phosphate + 2 H(+). Its function is as follows. Allows the formation of correctly charged Asn-tRNA(Asn) or Gln-tRNA(Gln) through the transamidation of misacylated Asp-tRNA(Asn) or Glu-tRNA(Gln) in organisms which lack either or both of asparaginyl-tRNA or glutaminyl-tRNA synthetases. The reaction takes place in the presence of glutamine and ATP through an activated phospho-Asp-tRNA(Asn) or phospho-Glu-tRNA(Gln). The sequence is that of Aspartyl/glutamyl-tRNA(Asn/Gln) amidotransferase subunit B from Streptomyces avermitilis (strain ATCC 31267 / DSM 46492 / JCM 5070 / NBRC 14893 / NCIMB 12804 / NRRL 8165 / MA-4680).